We begin with the raw amino-acid sequence, 157 residues long: Arginine repressor (157 aa).

It belongs to the ArgR family.

Its subcellular location is the cytoplasm. The protein operates within amino-acid biosynthesis; L-arginine biosynthesis [regulation]. Regulates arginine biosynthesis genes. This is Arginine repressor from Deinococcus deserti (strain DSM 17065 / CIP 109153 / LMG 22923 / VCD115).